The primary structure comprises 247 residues: Probable transcriptional regulatory protein PC1_1817 (247 aa).

This sequence belongs to the TACO1 family.

It is found in the cytoplasm. The protein is Probable transcriptional regulatory protein PC1_1817 of Pectobacterium carotovorum subsp. carotovorum (strain PC1).